The primary structure comprises 1096 residues: DNA-directed RNA polymerase subunit beta (1096 aa).

The interval 1070–1096 (LMQDVNPRRSTPSRPTYESLGSDYQED) is disordered.

It belongs to the RNA polymerase beta chain family. As to quaternary structure, in cyanobacteria the RNAP catalytic core is composed of 2 alpha, 1 beta, 1 beta', 1 gamma and 1 omega subunit. When a sigma factor is associated with the core the holoenzyme is formed, which can initiate transcription.

It catalyses the reaction RNA(n) + a ribonucleoside 5'-triphosphate = RNA(n+1) + diphosphate. Functionally, DNA-dependent RNA polymerase catalyzes the transcription of DNA into RNA using the four ribonucleoside triphosphates as substrates. In Prochlorococcus marinus (strain MIT 9211), this protein is DNA-directed RNA polymerase subunit beta.